Consider the following 379-residue polypeptide: Probable 3-phenylpropionic acid transporter (379 aa).

Residues 1 to 4 (MVLQ) are Cytoplasmic-facing. Residues 5-31 (STRWLALGYFTYFFSYGIFLPFWSVWL) traverse the membrane as a helical segment. Residues 32–37 (KGIGLT) lie on the Periplasmic side of the membrane. A helical transmembrane segment spans residues 38–66 (PETIGLLLGAGLVARFLGSLLIAPRVSDP). Topologically, residues 67-70 (SRLI) are cytoplasmic. Residues 71-96 (SALRVLALLTLLFAVAFWAGAHVAWL) form a helical membrane-spanning segment. Topologically, residues 97 to 100 (MLVM) are periplasmic. A helical transmembrane segment spans residues 101 to 118 (IGFNLFFSPLVPLTDALA). Topologically, residues 119 to 129 (NTWQKQFPLDY) are cytoplasmic. Residues 130 to 152 (GKVRLWGSVAFVIGSALTGKLVT) form a helical membrane-spanning segment. At 153–155 (MFD) the chain is on the periplasmic side. A helical membrane pass occupies residues 156–175 (YRVILALLTLGVASMLLGFL). Residues 176–207 (IRPTIQPQGASRQQESTGWSAWLALVRQNWRF) are Cytoplasmic-facing. A helical transmembrane segment spans residues 208–227 (LACVCLLQGAHAAYYGFSAI). The Periplasmic segment spans residues 228 to 231 (YWQA). The chain crosses the membrane as a helical span at residues 232–256 (AGYSASAVGYLWSLGVVAEVIIFAL). Over 257–266 (SNKLFRRCSA) the chain is Cytoplasmic. The helical transmembrane segment at 267–286 (RDMLLISAICGVVRWGIMGA) threads the bilayer. Over 287–289 (TTA) the chain is Periplasmic. A helical membrane pass occupies residues 290–312 (LPWLIVVQILHCGTFTVCHLAAM). Topologically, residues 313-323 (RYIAARQGSEV) are cytoplasmic. The helical transmembrane segment at 324–351 (IRLQAVYSAVAMGGSIAIMTVFAGFLYQ) threads the bilayer. The Periplasmic segment spans residues 352–354 (YLG). The chain crosses the membrane as a helical span at residues 355-375 (HGVFWVMALVALPAMFLRPKV). At 376–379 (VPSC) the chain is on the cytoplasmic side.

It belongs to the major facilitator superfamily. Phenyl propionate permease (PPP) (TC 2.A.1.27) family.

It localises to the cell inner membrane. In terms of biological role, probable permease involved in the uptake of 3-phenylpropionic acid. This chain is Probable 3-phenylpropionic acid transporter (hcaT), found in Escherichia coli (strain K12).